Consider the following 2303-residue polypeptide: Genome polyprotein (2303 aa).

Residues 3 to 14 (CKHGYPDVCPIC) fold into a zinc finger. The segment at 30-46 (DGEWYPTDLLCVDLDDD) is acidic. Residues 60 to 73 (MDWTDVPLIRDIVM) form a theilo region. A disordered region spans residues 74–93 (EPQGNSSSSDKSNSQSSGNE). A lipid anchor (N-myristoyl glycine; by host) is attached at Gly-77. The segment covering 78 to 92 (NSSSSDKSNSQSSGN) has biased composition (low complexity). Cys-501 and Cys-503 are joined by a disulfide. Residues 1041–1047 (YYRQRLI) are host EIF4E binding. The region spanning 1283–1448 (IPLASLCEKF…CKTPAGMLDV (166 aa)) is the SF3 helicase domain. 1312-1319 (GAAGQGKS) is a binding site for ATP. Tyr-1608 bears the O-(5'-phospho-RNA)-tyrosine mark. In terms of domain architecture, Peptidase C3 spans 1636–1829 (NPVMDFELFC…AATIITKELI (194 aa)). Active-site for protease 3C activity residues include His-1680, Asp-1714, and Cys-1793. Positions 2071 to 2189 (NYVYDVDYSN…GTNYQIDFNL (119 aa)) constitute a RdRp catalytic domain. Residues Asp-2077 and Asp-2175 each act as for RdRp activity in the active site.

The protein belongs to the picornaviruses polyprotein family. As to quaternary structure, interacts with host EIF4E. Interacts with the leader protein. Interacts with host RAN; the complex L-RAN recruits cellular kinases responsible for the L-induced nucleocytoplasmic trafficking inhibition. The complex L-RAN can further bind to the host exportins XPO1/CRM1 and CSE1L/CAS. Interacts with the protein 2A. Interacts with host RNASEL; this interaction prevents RNASEL activation by its substrate 2'-5' oligoadenylates. Post-translationally, phosphorylated. Specific enzymatic cleavages by the viral protease in vivo yield a variety of precursors and mature proteins. The polyprotein seems to be cotranslationally cleaved at the 2A/2B junction by a ribosomal skip from one codon to the next without formation of a peptide bond. This process would release the P1-2A peptide from the translational complex. In terms of processing, during virion maturation, immature virions are rendered infectious following cleavage of VP0 into VP4 and VP2. This maturation seems to be an autocatalytic event triggered by the presence of RNA in the capsid and is followed by a conformational change of the particle. Post-translationally, uridylylated by the polymerase and is covalently linked to the 5'-end of genomic RNA. This uridylylated form acts as a nucleotide-peptide primer for the polymerase. Myristoylation is required during RNA encapsidation and formation of the mature virus particle.

The protein localises to the virion. It localises to the host cytoplasm. The protein resides in the host nucleus. It is found in the host nucleolus. Its subcellular location is the host cytoplasmic vesicle membrane. It catalyses the reaction RNA(n) + a ribonucleoside 5'-triphosphate = RNA(n+1) + diphosphate. It carries out the reaction ATP + H2O = ADP + phosphate + H(+). The catalysed reaction is Selective cleavage of Gln-|-Gly bond in the poliovirus polyprotein. In other picornavirus reactions Glu may be substituted for Gln, and Ser or Thr for Gly.. Its function is as follows. Forms a complex with host RAN and probably binds to exportins carrying activated MAPK in order to mediate the hyperphosphorylation of host Phe/Gly containing nuclear pore proteins (Nups) resulting in cessation of active nucleocytoplasmic transport. Proteins with NLS signals fail to import, cellular mRNAs fail to export, and some proteins small enough for diffusion are not retained anymore (efflux). The resulting inhibition of cellular protein synthesis serves to ensure maximal viral gene expression and to evade host immune response. The leader protein also inhibits host interferon regulatory factor 3 (IRF3) dimerization, thereby blocking the transcriptional activation of IFN genes. Binds to host RNase L thereby preventing its activation by 2'-5' oligoadenylates in order to counteract the antiviral interferon-inducible OAS/RNase L pathway. Inhibits the integrated stress response (ISR) in the infected cell. Inhibits the host EIF2AK2/PKR by rendering this kinase unable to detect double-stranded RNA. Also impairs host stress granule formation probably by acting on a step downstream of EIF2AK2/PKR activation. Forms an icosahedral capsid of pseudo T=3 symmetry with capsid proteins VP2 and VP3. Together they form an icosahedral capsid composed of 60 copies of each VP1, VP2, and VP3, with a diameter of approximately 300 Angstroms. VP4 lies on the inner surface of the protein shell formed by VP1, VP2 and VP3. All the three latter proteins contain a beta-sheet structure called beta-barrel jelly roll. VP1 is situated at the 12 fivefold axes, whereas VP2 and VP3 are located at the quasi-sixfold axes. Functionally, lies on the inner surface of the capsid shell. After binding to the host receptor, the capsid undergoes conformational changes. Capsid protein VP4 is released, capsid protein VP1 N-terminus is externalized, and together, they shape a pore in the host membrane through which the viral genome is translocated into the host cell cytoplasm. After genome has been released, the channel shrinks. In terms of biological role, VP0 precursor is a component of immature procapsids. Its function is as follows. Involved in host translation shutoff by inhibiting cap-dependent mRNA translation. Nuclear localization is required for this function. The resulting inhibition of cellular protein synthesis serves to ensure maximal viral gene expression and to evade host immune response. Inhibits the phosphorylation of the leader protein. Affects membrane integrity and causes an increase in membrane permeability. Functionally, associates with and induces structural rearrangements of intracellular membranes. It displays RNA-binding, nucleotide binding and NTPase activities. In terms of biological role, serves as membrane anchor via its hydrophobic domain. Its function is as follows. Forms a primer, VPg-pU, which is utilized by the polymerase for the initiation of RNA chains. Cysteine protease that generates mature viral proteins from the precursor polyprotein. In addition to its proteolytic activity, it binds to viral RNA, and thus influences viral genome replication. RNA and substrate cooperatively bind to the protease. Cleaves host PABP1, this cleavage is important for viral replication. Functionally, replicates the genomic and antigenomic RNAs by recognizing replications specific signals. Performs VPg uridylylation. The polypeptide is Genome polyprotein (Mus musculus (Mouse)).